Consider the following 339-residue polypeptide: Protein FAM50A (339 aa).

A disordered region spans residues 1–31 (MAQYKGAASEAGRAMHLMKKREKQREQMEQM). Ala-2 carries the post-translational modification N-acetylalanine. Lys-100 is covalently cross-linked (Glycyl lysine isopeptide (Lys-Gly) (interchain with G-Cter in SUMO2)). The disordered stretch occupies residues 121 to 177 (SFTLEEEEEGGEEEEEAAMYEEEMEREEITTKKRKLGKNPDVDTSFLPDRDREEEEN). The segment covering 124–146 (LEEEEEGGEEEEEAAMYEEEMER) has biased composition (acidic residues). The Nuclear localization signal signature appears at 152–155 (KKRK). Over residues 168–177 (PDRDREEEEN) the composition is skewed to basic and acidic residues.

This sequence belongs to the FAM50 family. In terms of assembly, interacts with EFTUD2, a component of the spliceosome U5 complex. Interacts with DDX41, a component of the spliceosome C complex. As to expression, widely expressed in fetal and adult tissues. Mostly abundant in fetal brain, liver and kidney; in the adult, high levels were also observed in heart, skeletal muscle, spleen, thymus, prostate and small intestine. Expressed in fetal cerebellum and hypothalamus. Low expression is observed in fetal temporal lobe.

It is found in the nucleus. Functionally, probably involved in the regulation of pre-mRNA splicing. In Homo sapiens (Human), this protein is Protein FAM50A (FAM50A).